The following is a 387-amino-acid chain: S-adenosylmethionine synthase (387 aa).

An ATP-binding site is contributed by histidine 17. Aspartate 19 contributes to the Mg(2+) binding site. A K(+)-binding site is contributed by glutamate 45. L-methionine is bound by residues glutamate 58 and glutamine 101. A flexible loop region spans residues 101-111; the sequence is QSADIAMGVDA. Residues 166-168, 231-232, aspartate 240, 246-247, alanine 263, and lysine 267 each bind ATP; these read DAK, RF, and RK. Aspartate 240 serves as a coordination point for L-methionine. Lysine 271 is a binding site for L-methionine.

Belongs to the AdoMet synthase family. Homotetramer; dimer of dimers. Mg(2+) serves as cofactor. Requires K(+) as cofactor.

It localises to the cytoplasm. It carries out the reaction L-methionine + ATP + H2O = S-adenosyl-L-methionine + phosphate + diphosphate. Its pathway is amino-acid biosynthesis; S-adenosyl-L-methionine biosynthesis; S-adenosyl-L-methionine from L-methionine: step 1/1. Its function is as follows. Catalyzes the formation of S-adenosylmethionine (AdoMet) from methionine and ATP. The overall synthetic reaction is composed of two sequential steps, AdoMet formation and the subsequent tripolyphosphate hydrolysis which occurs prior to release of AdoMet from the enzyme. This is S-adenosylmethionine synthase from Rhodospirillum centenum (strain ATCC 51521 / SW).